The chain runs to 272 residues: Orotidine 5'-phosphate decarboxylase (272 aa).

Lys-96 (proton donor) is an active-site residue.

This sequence belongs to the OMP decarboxylase family. Type 2 subfamily.

It carries out the reaction orotidine 5'-phosphate + H(+) = UMP + CO2. It participates in pyrimidine metabolism; UMP biosynthesis via de novo pathway; UMP from orotate: step 2/2. This is Orotidine 5'-phosphate decarboxylase from Christiangramia forsetii (strain DSM 17595 / CGMCC 1.15422 / KT0803) (Gramella forsetii).